Reading from the N-terminus, the 429-residue chain is Sex determination protein fox-1 (429 aa).

Low complexity predominate over residues 156 to 180; that stretch reads ATTAGSTNGSAAVTQPDPSTSSGPD. The tract at residues 156-188 is disordered; it reads ATTAGSTNGSAAVTQPDPSTSSGPDGPKRLHVS. The RRM domain occupies 183 to 259; sequence KRLHVSNIPF…RKIEVNCATA (77 aa).

Interacts with sup-12. In terms of tissue distribution, in males and hermaphrodites expressed in a subset of cells in the head and tail. Expressed in the pharynx, intestine and in muscles from the vulva and body wall.

The protein resides in the nucleus. RNA-binding protein that regulates tissue-specific alternative splicing events by binding to 5'-UGCAUG-3' and 5'-GCACG-3' elements. Also binds to poly(A), poly(G), poly(C), or poly(U) stretches of RNA. Plays a role in the sex determination pathway and X chromosome dosage compensation, and together with sex-1 is involved in making the distinction between one and two X-chromosomes. Binds to 5'-GCAUG-3' and 5'-GCACG-3' elements in intron 6 of the pre-mRNA of the sex-determining factor xol-1 to promote its alternative splicing and together with sex-1 negatively regulates the expression of xol-1 to promote hermaphrodite development. Negatively regulates the expression of the active isoform of xol-1 (isoform b) by promoting intron 6 retention and the deletion of exon 7 coding sequences in hermaphrodite embryos. Furthermore, binding to the pre-mRNA of xol-1 can also direct the use of an alternative 3' splice site enabling the xol-1 transcript to be trans-spliced to unrelated genes on chromosome 2, which also leads to xol-1 exon 7 deletion. Does not seem to regulate the retention of introns 1 to 5 of xol-1 pre-mRNA. Plays a role in the association of the dosage compensation complex proteins dpy-27 and sdc-3 with the hermaphrodite X chromosomes. Binds to 5'-UGCAUG-3' elements in intron 7 of the pre-mRNA of unc-32 to promote its alternative splicing in neuronal tissues. Binds to 5'-UGCAUG-3' elements in intron 4 of the pre-mRNA of egl-15 to promote its alternative splicing in body wall muscle tissues. Promotes binding of RNA-binding protein sup-12 to target RNA. Plays a role in male mating behavior. In Caenorhabditis elegans, this protein is Sex determination protein fox-1.